The sequence spans 162 residues: SsrA-binding protein (162 aa).

It belongs to the SmpB family.

The protein resides in the cytoplasm. Functionally, required for rescue of stalled ribosomes mediated by trans-translation. Binds to transfer-messenger RNA (tmRNA), required for stable association of tmRNA with ribosomes. tmRNA and SmpB together mimic tRNA shape, replacing the anticodon stem-loop with SmpB. tmRNA is encoded by the ssrA gene; the 2 termini fold to resemble tRNA(Ala) and it encodes a 'tag peptide', a short internal open reading frame. During trans-translation Ala-aminoacylated tmRNA acts like a tRNA, entering the A-site of stalled ribosomes, displacing the stalled mRNA. The ribosome then switches to translate the ORF on the tmRNA; the nascent peptide is terminated with the 'tag peptide' encoded by the tmRNA and targeted for degradation. The ribosome is freed to recommence translation, which seems to be the essential function of trans-translation. This is SsrA-binding protein from Granulibacter bethesdensis (strain ATCC BAA-1260 / CGDNIH1).